Reading from the N-terminus, the 386-residue chain is Cytoplasmic 60S subunit biogenesis factor ZNF622 (386 aa).

Alanine 2 carries the N-acetylalanine modification. U1-type zinc fingers lie at residues 4–28 and 67–91; these read YTCI…TDWH and TYCT…SRRH. The segment at 135 to 237 is disordered; sequence AIKAQPSTSP…AEDAEAEESP (103 aa). Over residues 165-176 the composition is skewed to basic and acidic residues; sequence GTPERDPTEKPP. The span at 194–235 shows a compositional bias: acidic residues; sequence EESEEEGEEDDEDWEDIDSDDGLECENPGVEEEDAEDAEAEE. Residue serine 269 is modified to Phosphoserine.

Belongs to the REI1 family. As to quaternary structure, homo- and heterodimer. Associates with pre-60S ribosomal particles. Interacts with MELK and MYBL2. Interacts with DNAJC21. Post-translationally, phosphorylated by MELK. The phosphorylation may redirect the protein to the nucleus. In terms of processing, ubiquitinated by HECTD1, leading to its degradation.

Its subcellular location is the cytoplasm. It is found in the nucleus. Functionally, pre-60S-associated cytoplasmic factor involved in the cytoplasmic maturation of the 60S subunit. This is Cytoplasmic 60S subunit biogenesis factor ZNF622 (Znf622) from Rattus norvegicus (Rat).